A 247-amino-acid chain; its full sequence is Carboxy-S-adenosyl-L-methionine synthase (247 aa).

S-adenosyl-L-methionine is bound by residues Tyr39, 64 to 66 (GCS), 89 to 90 (DN), 117 to 118 (DI), Asn132, and Arg199.

It belongs to the class I-like SAM-binding methyltransferase superfamily. Cx-SAM synthase family. As to quaternary structure, homodimer.

The catalysed reaction is prephenate + S-adenosyl-L-methionine = carboxy-S-adenosyl-L-methionine + 3-phenylpyruvate + H2O. Functionally, catalyzes the conversion of S-adenosyl-L-methionine (SAM) to carboxy-S-adenosyl-L-methionine (Cx-SAM). The polypeptide is Carboxy-S-adenosyl-L-methionine synthase (Escherichia coli O139:H28 (strain E24377A / ETEC)).